A 326-amino-acid chain; its full sequence is 3-methyl-2-oxobutanoate hydroxymethyltransferase 1 (326 aa).

Positions 52, 91, and 122 each coordinate Mg(2+). Residues 52–53 and aspartate 91 contribute to the 3-methyl-2-oxobutanoate site; that span reads DS. Glutamate 189 serves as the catalytic Proton acceptor.

This sequence belongs to the PanB family. Homodecamer; pentamer of dimers. Mg(2+) is required as a cofactor.

It is found in the cytoplasm. It carries out the reaction 3-methyl-2-oxobutanoate + (6R)-5,10-methylene-5,6,7,8-tetrahydrofolate + H2O = 2-dehydropantoate + (6S)-5,6,7,8-tetrahydrofolate. It participates in cofactor biosynthesis; (R)-pantothenate biosynthesis; (R)-pantoate from 3-methyl-2-oxobutanoate: step 1/2. Functionally, catalyzes the reversible reaction in which hydroxymethyl group from 5,10-methylenetetrahydrofolate is transferred onto alpha-ketoisovalerate to form ketopantoate. The polypeptide is 3-methyl-2-oxobutanoate hydroxymethyltransferase 1 (Bradyrhizobium diazoefficiens (strain JCM 10833 / BCRC 13528 / IAM 13628 / NBRC 14792 / USDA 110)).